A 35-amino-acid polypeptide reads, in one-letter code: U5-ctenitoxin-Co1a (35 aa).

4 disulfides stabilise this stretch: cysteine 4–cysteine 18, cysteine 11–cysteine 24, cysteine 17–cysteine 32, and cysteine 26–cysteine 30.

Expressed by the venom gland.

Its subcellular location is the secreted. Functionally, blocks voltage-gated sodium channels (Nav). This Ctenus ornatus (Brazilian spider) protein is U5-ctenitoxin-Co1a.